The following is a 66-amino-acid chain: Small ribosomal subunit protein eS27 (66 aa).

Zn(2+)-binding residues include Cys-21, Cys-24, Cys-40, and Cys-43. A C4-type zinc finger spans residues 21–43 (CRQCNNEQVIFSNATFPVRCLSC).

It belongs to the eukaryotic ribosomal protein eS27 family. As to quaternary structure, part of the 30S ribosomal subunit. It depends on Zn(2+) as a cofactor.

In Sulfolobus acidocaldarius (strain ATCC 33909 / DSM 639 / JCM 8929 / NBRC 15157 / NCIMB 11770), this protein is Small ribosomal subunit protein eS27.